A 750-amino-acid chain; its full sequence is Photosystem I P700 chlorophyll a apoprotein A1 (750 aa).

The next 8 membrane-spanning stretches (helical) occupy residues 70 to 93, 156 to 179, 195 to 219, 291 to 309, 346 to 369, 385 to 411, 433 to 455, and 531 to 549; these read VFSA…FHGA, LYCT…FHYH, LNHH…HVSL, TAHH…GHMY, WHAQ…HHMY, LSLF…IFMV, AIVS…LYIH, and FLVH…LILL. 2 residues coordinate [4Fe-4S] cluster: Cys-573 and Cys-582. The next 2 helical transmembrane spans lie at 589-610 and 664-686; these read HVFL…HFSW and LSAY…MFLF. Residue His-675 coordinates chlorophyll a'. Met-683 and Tyr-691 together coordinate chlorophyll a. A phylloquinone-binding site is contributed by Trp-692. A helical transmembrane segment spans residues 724 to 744; that stretch reads AVGVAHYLLGGIVTTWAFFLA.

Belongs to the PsaA/PsaB family. As to quaternary structure, the PsaA/B heterodimer binds the P700 chlorophyll special pair and subsequent electron acceptors. PSI consists of a core antenna complex that captures photons, and an electron transfer chain that converts photonic excitation into a charge separation. The eukaryotic PSI reaction center is composed of at least 11 subunits. P700 is a chlorophyll a/chlorophyll a' dimer, A0 is one or more chlorophyll a, A1 is one or both phylloquinones and FX is a shared 4Fe-4S iron-sulfur center. serves as cofactor.

Its subcellular location is the plastid. It is found in the chloroplast thylakoid membrane. It catalyses the reaction reduced [plastocyanin] + hnu + oxidized [2Fe-2S]-[ferredoxin] = oxidized [plastocyanin] + reduced [2Fe-2S]-[ferredoxin]. Its function is as follows. PsaA and PsaB bind P700, the primary electron donor of photosystem I (PSI), as well as the electron acceptors A0, A1 and FX. PSI is a plastocyanin-ferredoxin oxidoreductase, converting photonic excitation into a charge separation, which transfers an electron from the donor P700 chlorophyll pair to the spectroscopically characterized acceptors A0, A1, FX, FA and FB in turn. Oxidized P700 is reduced on the lumenal side of the thylakoid membrane by plastocyanin. This is Photosystem I P700 chlorophyll a apoprotein A1 from Pinus koraiensis (Korean pine).